The following is a 287-amino-acid chain: 4-hydroxybenzoate octaprenyltransferase (287 aa).

The next 6 helical transmembrane spans lie at 41-61 (WPLL…GCAM), 89-109 (WEAV…ILPL), 133-153 (FFAI…PMAF), 158-178 (DTVP…SVAY), 202-224 (FGRF…YVWI), and 266-286 (HNNW…LLAG).

It belongs to the UbiA prenyltransferase family. Mg(2+) serves as cofactor.

Its subcellular location is the cell inner membrane. The enzyme catalyses all-trans-octaprenyl diphosphate + 4-hydroxybenzoate = 4-hydroxy-3-(all-trans-octaprenyl)benzoate + diphosphate. It functions in the pathway cofactor biosynthesis; ubiquinone biosynthesis. In terms of biological role, catalyzes the prenylation of para-hydroxybenzoate (PHB) with an all-trans polyprenyl group. Mediates the second step in the final reaction sequence of ubiquinone-8 (UQ-8) biosynthesis, which is the condensation of the polyisoprenoid side chain with PHB, generating the first membrane-bound Q intermediate 3-octaprenyl-4-hydroxybenzoate. This Burkholderia cenocepacia (strain HI2424) protein is 4-hydroxybenzoate octaprenyltransferase.